The sequence spans 689 residues: Transcription factor MYC2 (689 aa).

The interval 94–172 (LQQRLQALID…VLRELNSLIS (79 aa)) is JAZ-interaction domain. Positions 316–349 (NTVQTNSVPSSNSNKQIAYGNENNHPSGNGQSCY) are enriched in polar residues. Disordered stretches follow at residues 316–361 (NTVQ…PQQQ) and 420–519 (QSQF…EAER). The segment covering 350 to 361 (NQQQQKNPPQQQ) has biased composition (low complexity). Over residues 471 to 495 (DSEHSDLEASVVKEADSSRVVEPEK) the composition is skewed to basic and acidic residues. Basic residues predominate over residues 496 to 505 (RPRKRGRKPA). A compositionally biased stretch (basic and acidic residues) spans 506–519 (NGREEPLNHVEAER). The segment at 509 to 522 (EEPLNHVEAERQRR) is basic motif; degenerate. The bHLH domain maps to 509-558 (EEPLNHVEAERQRREKLNQRFYALRAVVPNVSKMDKASLLGDAISYINEL). Residues 523-558 (EKLNQRFYALRAVVPNVSKMDKASLLGDAISYINEL) are helix-loop-helix motif. Residues 563 to 602 (QNTESDKEDLKSQIEDLKKESRRPGPPPPPNQDLKMSSHT) form a disordered region. Residues 566-585 (ESDKEDLKSQIEDLKKESRR) are compositionally biased toward basic and acidic residues.

As to quaternary structure, interacts (via N-terminus) with MED25. Interacts (via N-terminus) with JAZ7. MED25 and JAZ7 compete with each other to bind to MYC2. Interacts (via N-terminus) with MTB1. MTB1 and MED25 compete with each other to bind to MYC2. Expressed at low levels in roots, stems, leaves, flowers and fruits.

Its subcellular location is the nucleus. Transcriptional activator that binds to the G-box motif (5'-AACGTG-3') found in the promoter of the jasmonate-induced gene LAPA1. Acts as a negative regulator of blue light-mediated photomorphogenesis and positively regulates root growth. Promotes growth in response to the phytohormones abscisic acid (ABA) and jasmonate (JA). Binds to the G-box motif (5'-CACGTG-3') of the RBCS-3A gene promoter. Acts downstream of the jasmonate (JA) receptor to orchestrate JA-mediated activation of plant responses. Positively regulates both wound-responsive and pathogen-responsive genes through MYC2-targeted transcription factors (MTFs) involved in early response to JA. With JA2L forms a transcription module that regulates wounding-responsive genes. With ERF.C3 forms a transcription module that regulates pathogen-responsive genes. Plays a critical role in orchestrating JA-mediated defense gene expression during Botrytis cinerea infection. Negatively regulates defense responses to root-knot nematodes, potentially by mediating crosstalk among the hormones strigolactones, abscisic acid (ABA) and jasmonate (JA). Regulates the termination of JA-mediated defense responses by specifically binding the G-box (5'-CACATG-3') motifs in the promoters of MTB1, MTB2 and MTB3, which are transcription factors that negatively regulates JA signaling. May be involved in JA-induced chilling tolerance, possibly by ameliorating the antioxidant enzyme system of fruit and increasing proline and lycopene levels. The polypeptide is Transcription factor MYC2 (Solanum lycopersicum (Tomato)).